Reading from the N-terminus, the 378-residue chain is Metacaspase-1B (378 aa).

The tract at residues 1–70 is disordered; sequence MCSPPPYPPQ…QEAQSFGGGA (70 aa). Residues 10–29 are compositionally biased toward low complexity; the sequence is QGHHYPPSPHGSYYSPTPYG. Catalysis depends on residues histidine 169 and cysteine 225.

Belongs to the peptidase C14B family.

In terms of biological role, involved in cell death (apoptosis). The protein is Metacaspase-1B (casB) of Aspergillus terreus (strain NIH 2624 / FGSC A1156).